The primary structure comprises 254 residues: tRNA uridine(34) hydroxylase (254 aa).

Positions 123 to 217 (QDPNVILLDT…YLESIPESES (95 aa)) constitute a Rhodanese domain. C177 serves as the catalytic Cysteine persulfide intermediate.

It belongs to the TrhO family.

It catalyses the reaction uridine(34) in tRNA + AH2 + O2 = 5-hydroxyuridine(34) in tRNA + A + H2O. Catalyzes oxygen-dependent 5-hydroxyuridine (ho5U) modification at position 34 in tRNAs. This is tRNA uridine(34) hydroxylase from Legionella pneumophila (strain Paris).